An 891-amino-acid polypeptide reads, in one-letter code: Microtubule-associated protein 10 (891 aa).

4 disordered regions span residues 325 to 355, 401 to 457, 504 to 679, and 702 to 844; these read AAVQ…PPQI, EDKG…VTKG, SWKG…KSSC, and TTEN…SNLS. Residues 407-417 are compositionally biased toward low complexity; sequence PSTKSTSPSES. Polar residues-rich tracts occupy residues 509–520 and 527–544; these read VSSSAAESQMSP and PTDS…SQLP. 2 stretches are compositionally biased toward basic and acidic residues: residues 577 to 592 and 645 to 658; these read STTK…KQEM and TVDK…DGRQ. Polar residues-rich tracts occupy residues 665 to 679, 702 to 718, 726 to 749, 776 to 790, and 826 to 844; these read ADTS…KSSC, TTEN…SSTG, SRAS…SSVL, EASS…SQWT, and KSQS…SNLS.

As to quaternary structure, interacts (via middle region) with microtubules.

It localises to the cytoplasm. Its subcellular location is the cytoskeleton. It is found in the spindle pole. The protein resides in the microtubule organizing center. The protein localises to the centrosome. It localises to the midbody. Functionally, microtubule-associated protein (MAP) that plays a role in the regulation of cell division; promotes microtubule stability and participates in the organization of the spindle midzone and normal progress of cytokinesis. This chain is Microtubule-associated protein 10 (Map10), found in Mus musculus (Mouse).